The chain runs to 260 residues: NAD kinase (260 aa).

Asp-49 (proton acceptor) is an active-site residue. Residues Asp-49–Gly-50, Asn-119–Glu-120, Asp-149, Ala-157, and Thr-160–Ser-165 each bind NAD(+).

The protein belongs to the NAD kinase family. Requires a divalent metal cation as cofactor.

It is found in the cytoplasm. The enzyme catalyses NAD(+) + ATP = ADP + NADP(+) + H(+). In terms of biological role, involved in the regulation of the intracellular balance of NAD and NADP, and is a key enzyme in the biosynthesis of NADP. Catalyzes specifically the phosphorylation on 2'-hydroxyl of the adenosine moiety of NAD to yield NADP. This is NAD kinase from Caulobacter vibrioides (strain ATCC 19089 / CIP 103742 / CB 15) (Caulobacter crescentus).